Here is a 68-residue protein sequence, read N- to C-terminus: DNA-directed RNA polymerase subunit omega (68 aa).

It belongs to the RNA polymerase subunit omega family. As to quaternary structure, the RNAP catalytic core consists of 2 alpha, 1 beta, 1 beta' and 1 omega subunit. When a sigma factor is associated with the core the holoenzyme is formed, which can initiate transcription.

It catalyses the reaction RNA(n) + a ribonucleoside 5'-triphosphate = RNA(n+1) + diphosphate. In terms of biological role, promotes RNA polymerase assembly. Latches the N- and C-terminal regions of the beta' subunit thereby facilitating its interaction with the beta and alpha subunits. The protein is DNA-directed RNA polymerase subunit omega of Listeria monocytogenes serotype 4b (strain CLIP80459).